We begin with the raw amino-acid sequence, 519 residues long: Exodeoxyribonuclease 7 large subunit (519 aa).

The protein belongs to the XseA family. Heterooligomer composed of large and small subunits.

It localises to the cytoplasm. The catalysed reaction is Exonucleolytic cleavage in either 5'- to 3'- or 3'- to 5'-direction to yield nucleoside 5'-phosphates.. Its function is as follows. Bidirectionally degrades single-stranded DNA into large acid-insoluble oligonucleotides, which are then degraded further into small acid-soluble oligonucleotides. The sequence is that of Exodeoxyribonuclease 7 large subunit from Cereibacter sphaeroides (strain ATCC 17025 / ATH 2.4.3) (Rhodobacter sphaeroides).